The primary structure comprises 119 residues: Protein TusC (119 aa).

It belongs to the DsrF/TusC family. In terms of assembly, heterohexamer, formed by a dimer of trimers. The hexameric TusBCD complex contains 2 copies each of TusB, TusC and TusD. The TusBCD complex interacts with TusE.

It is found in the cytoplasm. Its function is as follows. Part of a sulfur-relay system required for 2-thiolation of 5-methylaminomethyl-2-thiouridine (mnm(5)s(2)U) at tRNA wobble positions. This Escherichia coli O127:H6 (strain E2348/69 / EPEC) protein is Protein TusC.